We begin with the raw amino-acid sequence, 283 residues long: Non-selective voltage-gated ion channel VDAC1 (283 aa).

N-acetylalanine is present on alanine 2. Lysine 12 contacts ATP. Lysine 12 is covalently cross-linked (Glycyl lysine isopeptide (Lys-Gly) (interchain with G-Cter in ubiquitin)). Phosphoserine is present on serine 13. At threonine 19 the chain carries Phosphothreonine. Lysine 20 lines the ATP pocket. Lysine 20 carries the post-translational modification N6-acetyllysine; alternate. Lysine 20 carries the N6-succinyllysine; alternate modification. A Glycyl lysine isopeptide (Lys-Gly) (interchain with G-Cter in ubiquitin); alternate cross-link involves residue lysine 20. The next 2 membrane-spanning stretches (beta stranded) occupy residues 26–35 (LIKLDLKTKS) and 39–47 (LEFTSSGSA). Glycyl lysine isopeptide (Lys-Gly) (interchain with G-Cter in ubiquitin) cross-links involve residues lysine 53 and lysine 61. Residues 54–64 (VNGSLETKYRW) traverse the membrane as a beta stranded segment. At tyrosine 67 the chain carries Phosphotyrosine. 3 beta stranded membrane-spanning segments follow: residues 69-76 (LTFTEKWN), 80-89 (TLGTEITVED), and 95-104 (LKLTFDSSFS). A Phosphothreonine modification is found at threonine 107. Lysine 109 carries the post-translational modification N6-acetyllysine; alternate. Lysine 109 participates in a covalent cross-link: Glycyl lysine isopeptide (Lys-Gly) (interchain with G-Cter in ubiquitin); alternate. A Glycyl lysine isopeptide (Lys-Gly) (interchain with G-Cter in ubiquitin) cross-link involves residue lysine 110. A run of 4 beta stranded transmembrane segments spans residues 111 to 120 (NAKIKTGYKR), 123 to 130 (INLGCDVD), 137 to 145 (SIRGALVLG), and 150 to 158 (LAGYQMNFE). Serine 137 is modified (phosphoserine). Residue lysine 161 forms a Glycyl lysine isopeptide (Lys-Gly) (interchain with G-Cter in ubiquitin) linkage. A run of 6 beta stranded transmembrane segments spans residues 163–175 (RVTQ…GYKT), 178–185 (FQLHTNVN), 189–198 (EFGGSIYQKV), 202–211 (LETAVNLAWT), 218–227 (RFGIAAKYQV), and 231–238 (ACFSAKVN). Serine 193 carries the phosphoserine; by NEK1 modification. Serine 240 carries the post-translational modification Phosphoserine. Residue 242 to 244 (LIG) participates in NAD(+) binding. A beta stranded transmembrane segment spans residues 242 to 251 (LIGLGYTQTL). Lysine 252 carries the post-translational modification N6-acetyllysine. A beta stranded membrane pass occupies residues 254–263 (GIKLTLSALL). An NAD(+)-binding site is contributed by 260–264 (SALLD). The residue at position 266 (lysine 266) is an N6-acetyllysine; alternate. A Glycyl lysine isopeptide (Lys-Gly) (interchain with G-Cter in ubiquitin); alternate cross-link involves residue lysine 266. A beta stranded transmembrane segment spans residues 273-282 (HKLGLGLEFQ). A Glycyl lysine isopeptide (Lys-Gly) (interchain with G-Cter in ubiquitin) cross-link involves residue lysine 274.

Belongs to the eukaryotic mitochondrial porin family. As to quaternary structure, homodimer and homotrimer; in response to cyclic AMP or calcium; oligomerization is required for scramblase activity. Component of the mitochondrial permeability transition pore complex (mPTPC), at least composed of SPG7, VDAC1 and PPIF. Interacts with SPG7, NIPSNAP2 and SLC25A30. Interacts with hexokinases including HK1. The HK1-VDAC1 complex interacts with ATF2. Interacts with BCL2L1. Interacts with BAK1. Interacts with RTL10/BOP (via BH3 domain). Interacts with amyloid-beta and APP; induces VDAC1 dephosphorylation. Interacts with TMEM41B. Interacts with BCAP31. Interacts with HSPA9; this interaction couples ITPR1 to VDAC1. In terms of processing, phosphorylation at Ser-193 by NEK1 promotes the closed conformational state preventing excessive mitochondrial membrane permeability and subsequent apoptotic cell death after injury. Phosphorylation by the AKT-GSK3B axis stabilizes the protein probably by preventing ubiquitin-mediated proteasomal degradation. Post-translationally, ubiquitinated. Undergoes monoubiquitination and polyubiquitination by PRKN; monoubiquitination at Lys-274 inhibits apoptosis, whereas polyubiquitination leads to its degradation and promotes mitophagy. Deubiquitinated by USP30. In terms of tissue distribution, widely expressed. High levels in heart and kidney with lower levels in brain and ascitic tumor. Very low levels in liver.

Its subcellular location is the mitochondrion outer membrane. The protein resides in the cell membrane. It localises to the membrane raft. The enzyme catalyses Ca(2+)(in) = Ca(2+)(out). It catalyses the reaction Na(+)(in) = Na(+)(out). It carries out the reaction chloride(in) = chloride(out). The catalysed reaction is Mg(2+)(in) = Mg(2+)(out). The enzyme catalyses K(+)(in) = K(+)(out). It catalyses the reaction ATP(in) = ATP(out). It carries out the reaction L-glutamate(out) = L-glutamate(in). The catalysed reaction is dopamine(out) = dopamine(in). The enzyme catalyses acetylcholine(in) = acetylcholine(out). It catalyses the reaction Fe(III)-[cytochrome c](out) = Fe(III)-[cytochrome c](in). It carries out the reaction a 1,2-diacyl-sn-glycero-3-phosphocholine(in) = a 1,2-diacyl-sn-glycero-3-phosphocholine(out). The catalysed reaction is a 1,2-diacyl-sn-glycero-3-phospho-L-serine(in) = a 1,2-diacyl-sn-glycero-3-phospho-L-serine(out). Its activity is regulated as follows. Inhibited by nitric oxide. Voltage-gated ion channel activity is inhibited by lanthanum(3+) and ruthenium red. Mitochondrial calcium transport is inhibited by lanthanum(3+), ruthenium red and Ru360. In terms of biological role, non-selective voltage-gated ion channel that mediates the transport of anions and cations through the mitochondrion outer membrane and plasma membrane. The channel at the outer mitochondrial membrane allows diffusion of small hydrophilic molecules; in the plasma membrane it is involved in cell volume regulation and apoptosis. It adopts an open conformation at low or zero membrane potential and a closed conformation at potentials above 30-40 mV. The open state has a weak anion selectivity whereas the closed state is cation-selective. Binds various signaling molecules, including the sphingolipid ceramide, the phospholipid phosphatidylcholine, and the sterols cholesterol and oxysterol. In depolarized mitochondria, acts downstream of PRKN and PINK1 to promote mitophagy or prevent apoptosis; polyubiquitination by PRKN promotes mitophagy, while monoubiquitination by PRKN decreases mitochondrial calcium influx which ultimately inhibits apoptosis. May participate in the formation of the permeability transition pore complex (PTPC) responsible for the release of mitochondrial products that triggers apoptosis. May mediate ATP export from cells. Part of a complex composed of HSPA9, ITPR1 and VDAC1 that regulates mitochondrial calcium-dependent apoptosis by facilitating calcium transport from the ER lumen to the mitochondria intermembrane space thus providing calcium for the downstream calcium channel MCU that directly releases it into mitochondria matrix. Its function is as follows. Catalyzes the scrambling of phospholipids across the outer mitochondrial membrane; the mechanism is unrelated to channel activity and is capable of translocating both anionic and zwitterionic phospholipids. This is Non-selective voltage-gated ion channel VDAC1 from Rattus norvegicus (Rat).